A 575-amino-acid chain; its full sequence is Polyprotein P2A (575 aa).

3 helical membrane passes run 10-30 (FLIT…HTGG), 36-56 (LIPI…SASF), and 74-96 (VARV…VMMQ). Residues 135-335 (VLGSFYSSVK…TLPPELSVIE (201 aa)) enclose the Peptidase S39 domain. Catalysis depends on for protease activity residues histidine 181, aspartate 216, and serine 284. Residues 513–575 (KTSLSATPPP…QPTKTSLRGI (63 aa)) form a disordered region. Residues 541-553 (KSARRRNRRKSTR) are compositionally biased toward basic residues. The span at 558–575 (ESPSPASPQPTKTSLRGI) shows a compositional bias: polar residues.

In terms of processing, the polyprotein is proteolytically cleaved into several chains by the viral protease.

It is found in the host membrane. Responsible for cleavages of polyprotein P2A and replicase polyprotein P2AB. In terms of biological role, covalently attached to the 5' extremity of the genomic and subgenomic RNAs. It may serve as a primer for the replicase. The chain is Polyprotein P2A from Southern bean mosaic virus (isolate Bean/United States/Arkansas) (SBMV).